The following is an 837-amino-acid chain: SLIT and NTRK-like protein 4 (837 aa).

A signal peptide spans 1–18; it reads MFLWLFLIVSALISSTNA. The Extracellular portion of the chain corresponds to 19-618; it reads DSDISVEICN…SPPGGPVPLS (600 aa). 6 LRR repeats span residues 60–81, 84–105, 108–129, 132–153, 156–177, and 179–200; these read NFYH…TFVN, HAVS…AFLG, ALKQ…TFLG, NLEY…AFNK, KLKV…IFRF, and SLTH…GVLE. Asparagine 81 is a glycosylation site (N-linked (GlcNAc...) asparagine). Residues 213-264 enclose the LRRCT 1 domain; sequence NPWNCSCDLLPLKAWLENMPYNIYIGEAICETPSDLYGRLLKETNKQELCPM. An N-linked (GlcNAc...) asparagine glycan is attached at asparagine 325. The LRRNT domain maps to 333-375; sequence QTRVPPLTPCPVPCFCKTHPSDLGLSVNCQEKNIQSMSELTPK. LRR repeat units lie at residues 378–399, 402–423, 426–447, 450–471, 474–495, and 497–518; these read NAKK…DFTE, GLDL…VFHN, NLRR…IFSG, NLQY…TFDS, NLQL…IFSG, and PLAR…GVLD. Residue asparagine 423 is glycosylated (N-linked (GlcNAc...) asparagine). The region spanning 531–582 is the LRRCT 2 domain; the sequence is NPWDCTCDLVALKLWLEKLNDGIVVKELKCETPVQFANIELKSLKNEILCPK. The chain crosses the membrane as a helical span at residues 619 to 639; that stretch reads ILILSILVVLILTVFVAFCLL. At 640–837 the chain is on the cytoplasmic side; it reads VFVLRRNKKP…LEEQTALNKI (198 aa).

It belongs to the SLITRK family. In terms of assembly, interacts (via LRR 1 and 2 repeats) with PTPRD (via extracellular domain). In terms of tissue distribution, in the adult, significant expression is detected only in the brain. Broadly expressed in embryonic brain with highest expression in subventricular zone, subplate, cortical plate, pyramidal cell layer of hippocampus, thalamus and hypothalamus.

The protein localises to the membrane. It localises to the cell membrane. Its function is as follows. It is involved in synaptogenesis and promotes synapse differentiation. Suppresses neurite outgrowth. The protein is SLIT and NTRK-like protein 4 (Slitrk4) of Mus musculus (Mouse).